A 184-amino-acid chain; its full sequence is Ribosome maturation factor RimM (184 aa).

In terms of domain architecture, PRC barrel spans 93 to 165; it reads DEGWYEHELV…YILITPPSGL (73 aa).

The protein belongs to the RimM family. In terms of assembly, binds ribosomal protein uS19.

Its subcellular location is the cytoplasm. Functionally, an accessory protein needed during the final step in the assembly of 30S ribosomal subunit, possibly for assembly of the head region. Essential for efficient processing of 16S rRNA. May be needed both before and after RbfA during the maturation of 16S rRNA. It has affinity for free ribosomal 30S subunits but not for 70S ribosomes. In Paenarthrobacter aurescens (strain TC1), this protein is Ribosome maturation factor RimM.